The chain runs to 433 residues: FAD-dependent monooxygenase notI (433 aa).

FAD-binding residues include glutamate 45 and arginine 117. Arginine 195 is a catalytic residue. FAD-binding residues include aspartate 314 and alanine 327.

It belongs to the paxM FAD-dependent monooxygenase family. The cofactor is FAD.

It functions in the pathway alkaloid biosynthesis. FAD-dependent monooxygenase; part of the gene cluster that mediates the biosynthesis of notoamide, a fungal indole alkaloid that belongs to a family of natural products containing a characteristic bicyclo[2.2.2]diazaoctane core. The first step of notoamide biosynthesis involves coupling of L-proline and L-tryptophan by the bimodular NRPS notE, to produce cyclo-L-tryptophan-L-proline called brevianamide F. The reverse prenyltransferase notF then acts as a deoxybrevianamide E synthase and converts brevianamide F to deoxybrevianamide E via reverse prenylation at C-2 of the indole ring leading to the bicyclo[2.2.2]diazaoctane core. Deoxybrevianamide E is further hydroxylated at C-6 of the indole ring, likely catalyzed by the cytochrome P450 monooxygenase notG, to yield 6-hydroxy-deoxybrevianamide E. 6-hydroxy-deoxybrevianamide E is a specific substrate of the prenyltransferase notC for normal prenylation at C-7 to produce 6-hydroxy-7-prenyl-deoxybrevianamide, also called notoamide S. As the proposed pivotal branching point in notoamide biosynthesis, notoamide S can be diverted to notoamide E through an oxidative pyran ring closure putatively catalyzed by either notH cytochrome P450 monooxygenase or the notD FAD-linked oxidoreductase. This step would be followed by an indole 2,3-epoxidation-initiated pinacol-like rearrangement catalyzed by the notB FAD-dependent monooxygenase leading to the formation of notoamide C and notoamide D. On the other hand notoamide S is converted to notoamide T by notH (or notD), a bifunctional oxidase that also functions as the intramolecular Diels-Alderase responsible for generation of (+)-notoamide T. To generate antipodal (-)-notoaminide T, notH' (or notD') in Aspergillus versicolor is expected to catalyze a Diels-Alder reaction leading to the opposite stereochemistry. The remaining oxidoreductase notD (or notH) likely catalyzes the oxidative pyran ring formation to yield (+)-stephacidin A. The FAD-dependent monooxygenase notI is highly similar to notB and is predicted to catalyze a similar conversion from (+)-stephacidin A to (-)-notoamide B via the 2,3-epoxidation of (+)-stephacidin A followed by a pinacol-type rearrangement. Finally, it remains unclear which enzyme could be responsible for the final hydroxylation steps leading to notoamide A and sclerotiamide. In Aspergillus sp. (strain MF297-2), this protein is FAD-dependent monooxygenase notI.